We begin with the raw amino-acid sequence, 315 residues long: MISNFDCTDNQASSKVLRPPGGGSSDIFGSEMPQTPRNVKNRMASNIFAAEKDNGVKNNGDAPRRGQKTVDSHSRLFGEPTRPITPGKNHMKSSIPFGQNTEAVAAQKLLTTNGHYNGKSGSVSSASSSVSSSTENLKMNSGSRSVFRNMSKPARAETPIPPADDALSIDNSCRDSEVGDVPADNRTVTKSDQVNEGCQTRRDSGNNPEQPYSLNKMAGVSNVKEPLGLCPNEIKEERQACAKLDSRNPITGLGLNGDGVGGLKPKKLRIREGNPVTGEGYKANDFTQRQESSNGGTPVINKNRIPPGGFSSGLW.

Over residues 1–14 (MISNFDCTDNQASS) the composition is skewed to polar residues. 2 disordered regions span residues 1 to 37 (MISN…QTPR) and 51 to 89 (EKDN…PGKN). A Phosphoserine modification is found at Ser-24. At Thr-35 the chain carries Phosphothreonine. Basic and acidic residues predominate over residues 62–76 (APRRGQKTVDSHSRL). Phosphothreonine is present on residues Thr-81 and Thr-85. A phosphoserine mark is found at Ser-94, Ser-122, and Ser-133. Disordered regions lie at residues 116-166 (YNGK…ADDA) and 272-315 (EGNP…SGLW). The span at 120–133 (SGSVSSASSSVSSS) shows a compositional bias: low complexity. Composition is skewed to polar residues over residues 134–148 (TENL…SVFR) and 285–296 (DFTQRQESSNGG).

This sequence belongs to the MAP Jupiter family.

It is found in the nucleus. Its subcellular location is the cytoplasm. It localises to the cytoskeleton. The protein resides in the spindle. Functionally, binds to all microtubule populations. This Drosophila sechellia (Fruit fly) protein is Microtubule-associated protein Jupiter.